An 89-amino-acid polypeptide reads, in one-letter code: Small ribosomal subunit protein uS15 (89 aa).

This sequence belongs to the universal ribosomal protein uS15 family. As to quaternary structure, part of the 30S ribosomal subunit. Forms a bridge to the 50S subunit in the 70S ribosome, contacting the 23S rRNA.

One of the primary rRNA binding proteins, it binds directly to 16S rRNA where it helps nucleate assembly of the platform of the 30S subunit by binding and bridging several RNA helices of the 16S rRNA. In terms of biological role, forms an intersubunit bridge (bridge B4) with the 23S rRNA of the 50S subunit in the ribosome. This Azoarcus sp. (strain BH72) protein is Small ribosomal subunit protein uS15.